A 437-amino-acid chain; its full sequence is ATP-dependent RNA helicase SUB2 (437 aa).

Residues 1-19 show a composition bias toward acidic residues; that stretch reads MSHEAEEDLLEYSDNEQEV. The interval 1-45 is disordered; it reads MSHEAEEDLLEYSDNEQEVQVDNKATEVNAEGNGESQAKDSDKKG. The Q motif motif lies at 53–81; sequence TGFKDFLLKPELSRAIIDCGFEHPSEVQQ. Residues 84–259 form the Helicase ATP-binding domain; it reads IPQSIHGTDV…RRFLQNPLEI (176 aa). Position 97–104 (97–104) interacts with ATP; that stretch reads AKSGLGKT. Positions 206–209 match the DECD box motif; sequence DECD. In terms of domain architecture, Helicase C-terminal spans 287 to 432; sequence KLAQLLDDLE…EFPEEGVDPS (146 aa).

It belongs to the DEAD box helicase family. DECD subfamily.

The protein resides in the nucleus. The enzyme catalyses ATP + H2O = ADP + phosphate + H(+). In terms of biological role, ATP-binding RNA helicase involved in transcription elongation and required for the export of mRNA out of the nucleus. SUB2 also plays a role in pre-mRNA splicing and spliceosome assembly. May be involved in rDNA and telomeric silencing, and maintenance of genome integrity. In Kluyveromyces lactis (strain ATCC 8585 / CBS 2359 / DSM 70799 / NBRC 1267 / NRRL Y-1140 / WM37) (Yeast), this protein is ATP-dependent RNA helicase SUB2 (SUB2).